A 335-amino-acid chain; its full sequence is Basic endochitinase B (335 aa).

Residues 1–33 (MPPQKENHRTLNKMKTNLFLFLIFSLLLSLSSA) form the signal peptide. One can recognise a Chitin-binding type-1 domain in the interval 34–75 (EQCGRQAGGALCPNGLCCSEFGWCGNTEPYCKQPGCQSQCTP). 7 cysteine pairs are disulfide-bonded: C36/C51, C45/C57, C50/C64, C69/C73, C107/C169, C181/C189, and C288/C320. E151 serves as the catalytic Proton donor. Residues 329–335 (GLLEAAI) constitute a propeptide, removed in mature form. The short motif at 329–335 (GLLEAAI) is the Vacuolar targeting signal element.

The protein belongs to the glycosyl hydrolase 19 family. Chitinase class I subfamily. In terms of tissue distribution, high constitutive level in roots with lower levels in leaves and flowering shoots.

It is found in the vacuole. The enzyme catalyses Random endo-hydrolysis of N-acetyl-beta-D-glucosaminide (1-&gt;4)-beta-linkages in chitin and chitodextrins.. Defense against chitin-containing fungal pathogens. Seems particularly implicated in resistance to jasmonate-inducing pathogens such as A.brassicicola. In vitro antifungal activity against T.reesei, but not against A.solani, F.oxysporum, S.sclerotiorum, G.graminis and P.megasperma. The chain is Basic endochitinase B (CHI-B) from Arabidopsis thaliana (Mouse-ear cress).